Here is a 288-residue protein sequence, read N- to C-terminus: MGLAAVKTRQKFGLDPRNTAWSNDQSRFGHKHLMRFGWQPGQGLGTQPVQSMKTHIKVSIKDDNLGLGAKLKKNKGDKIDEFDNGECAGLDVFQRILGRLNGKETEVNKELEIQRKDKILNGKWGVHFVKGDTLASTWDPKTKKLLSYSQMEKDSSSDEESDDDEDEKKKHKIEKKEAKKSKKRKRDSESDSESKKKKKSKKDKKEKKSKKDKKNKKEKESKKDKKSKHKKDKKQEIRTASIESSTSATSIPESVSTRLSVRSKWIKQKRAAVMDSKALNEIFMVTGN.

A G-patch domain is found at 25-72; that stretch reads QSRFGHKHLMRFGWQPGQGLGTQPVQSMKTHIKVSIKDDNLGLGAKLK. Residues 147 to 258 are disordered; it reads SYSQMEKDSS…TSIPESVSTR (112 aa). Residues 157 to 166 show a composition bias toward acidic residues; sequence SDEESDDDED. Basic residues-rich tracts occupy residues 169-185 and 195-214; these read KKHKIEKKEAKKSKKRK and KKKKKSKKDKKEKKSKKDKK. Over residues 238–256 the composition is skewed to low complexity; it reads RTASIESSTSATSIPESVS.

Belongs to the PINX1 family.

Its subcellular location is the nucleus. It localises to the nucleolus. Involved in rRNA-processing at A0, A1 and A2 sites and negatively regulates telomerase. This is Protein PXR1 (PXR1) from Candida glabrata (strain ATCC 2001 / BCRC 20586 / JCM 3761 / NBRC 0622 / NRRL Y-65 / CBS 138) (Yeast).